Reading from the N-terminus, the 173-residue chain is Probable lipoprotein EnvE (173 aa).

Residues 1–20 (MTLLSGKTTLVLCLSSILCG) form the signal peptide. A lipid anchor (N-palmitoyl cysteine) is attached at Cys21. The S-diacylglycerol cysteine moiety is linked to residue Cys21.

It is found in the cell membrane. In Salmonella typhimurium (strain LT2 / SGSC1412 / ATCC 700720), this protein is Probable lipoprotein EnvE (envE).